Here is a 142-residue protein sequence, read N- to C-terminus: Midkine (142 aa).

The signal sequence occupies residues 1–21 (MELRAFCVILLITFLAVSSQA). 5 disulfide bridges follow: C36-C60, C44-C69, C51-C73, C83-C115, and C93-C125.

Belongs to the pleiotrophin family.

Its subcellular location is the secreted. Functionally, secreted protein that functions as a cytokine and growth factor and mediates its signal through cell-surface proteoglycan and non-proteoglycan receptors. Binds cell-surface proteoglycan receptors via their chondroitin sulfate (CS) groups. Thereby regulates many processes like inflammatory response, cell proliferation, cell adhesion, cell growth, cell survival, tissue regeneration, cell differentiation and cell migration. Inhibits mesoderm formation and promotes neural formation during development. Plays a role in development of the neuromuscular junction (NMJ). Has antibacterial activity against both Gram-positive and Gram-negative bacteria. The sequence is that of Midkine from Xenopus tropicalis (Western clawed frog).